Here is a 222-residue protein sequence, read N- to C-terminus: Cytidylate kinase (222 aa).

Residue 9–17 participates in ATP binding; the sequence is GPAGSGKTT.

This sequence belongs to the cytidylate kinase family. Type 1 subfamily.

It is found in the cytoplasm. The catalysed reaction is CMP + ATP = CDP + ADP. It catalyses the reaction dCMP + ATP = dCDP + ADP. This chain is Cytidylate kinase, found in Thermosipho africanus (strain TCF52B).